The following is a 565-amino-acid chain: NAD-dependent malic enzyme (565 aa).

Tyrosine 104 serves as the catalytic Proton donor. Arginine 157 lines the NAD(+) pocket. Lysine 175 acts as the Proton acceptor in catalysis. Positions 246, 247, and 270 each coordinate a divalent metal cation. Residues aspartate 270 and asparagine 418 each coordinate NAD(+).

The protein belongs to the malic enzymes family. In terms of assembly, homotetramer. The cofactor is Mg(2+). Requires Mn(2+) as cofactor.

The enzyme catalyses (S)-malate + NAD(+) = pyruvate + CO2 + NADH. The catalysed reaction is oxaloacetate + H(+) = pyruvate + CO2. The protein is NAD-dependent malic enzyme of Salmonella dublin (strain CT_02021853).